The sequence spans 381 residues: Chaperone protein DnaJ (381 aa).

One can recognise a J domain in the interval 5 to 70 (DYYEVLGCDR…QKRGAYDRYG (66 aa)). A CR-type zinc finger spans residues 136 to 214 (GKTAQISIPT…CGGAGRVTRE (79 aa)). Cysteine 149, cysteine 152, cysteine 166, cysteine 169, cysteine 188, cysteine 191, cysteine 202, and cysteine 205 together coordinate Zn(2+). 4 CXXCXGXG motif repeats span residues 149 to 156 (CEVCSGSG), 166 to 173 (CRTCNGAG), 188 to 195 (CPSCQGRG), and 202 to 209 (CPNCGGAG).

Belongs to the DnaJ family. Homodimer. Zn(2+) serves as cofactor.

It localises to the cytoplasm. Participates actively in the response to hyperosmotic and heat shock by preventing the aggregation of stress-denatured proteins and by disaggregating proteins, also in an autonomous, DnaK-independent fashion. Unfolded proteins bind initially to DnaJ; upon interaction with the DnaJ-bound protein, DnaK hydrolyzes its bound ATP, resulting in the formation of a stable complex. GrpE releases ADP from DnaK; ATP binding to DnaK triggers the release of the substrate protein, thus completing the reaction cycle. Several rounds of ATP-dependent interactions between DnaJ, DnaK and GrpE are required for fully efficient folding. Also involved, together with DnaK and GrpE, in the DNA replication of plasmids through activation of initiation proteins. The protein is Chaperone protein DnaJ of Azorhizobium caulinodans (strain ATCC 43989 / DSM 5975 / JCM 20966 / LMG 6465 / NBRC 14845 / NCIMB 13405 / ORS 571).